Reading from the N-terminus, the 131-residue chain is MYAVIRAGSKQFRVSPGDVIKVDSAPHSESGKLEIADVLAVSNGQGKFGSPENATVTAEILGDGRGDKILVFHYKRKKQYKKLQGHRQGFTALKITEINVDGEKFTIDDMPKKEAAPAKARRSTKKAAAAE.

Basic and acidic residues predominate over residues 106 to 116 (TIDDMPKKEAA). A disordered region spans residues 106-131 (TIDDMPKKEAAPAKARRSTKKAAAAE).

It belongs to the bacterial ribosomal protein bL21 family. In terms of assembly, part of the 50S ribosomal subunit. Contacts protein L20.

Functionally, this protein binds to 23S rRNA in the presence of protein L20. In Koribacter versatilis (strain Ellin345), this protein is Large ribosomal subunit protein bL21.